The following is a 91-amino-acid chain: Small ribosomal subunit protein uS19 (91 aa).

It belongs to the universal ribosomal protein uS19 family.

In terms of biological role, protein S19 forms a complex with S13 that binds strongly to the 16S ribosomal RNA. The chain is Small ribosomal subunit protein uS19 from Lachnospira eligens (strain ATCC 27750 / DSM 3376 / VPI C15-48 / C15-B4) (Eubacterium eligens).